The sequence spans 699 residues: Ubiquitin-like modifier-activating enzyme ATG7 (699 aa).

A GXGXXG motif motif is present at residues 370–375 (GAGTLG). Catalysis depends on Cys-550, which acts as the Glycyl thioester intermediate. A homodimerization region spans residues 653-691 (ALASRDYVAELSGLAEVQRLAEKAAAEMQWSEDEEGMGE).

This sequence belongs to the ATG7 family. As to quaternary structure, homodimer. Interacts with ATG8 through a thioester bond between Cys-550 and the C-terminal Gly of ATG8 and with ATG12 through a thioester bond between Cys-550 and the C-terminal Gly of ATG12. Also interacts with ATG3.

The protein resides in the cytoplasm. The protein localises to the preautophagosomal structure. In terms of biological role, E1-like activating enzyme involved in the 2 ubiquitin-like systems required for cytoplasm to vacuole transport (Cvt) and autophagy. Activates ATG12 for its conjugation with ATG5 and ATG8 for its conjugation with phosphatidylethanolamine. Both systems are needed for the ATG8 association to Cvt vesicles and autophagosomes membranes. Autophagy is essential for maintenance of amino acid levels and protein synthesis under nitrogen starvation. Required for selective autophagic degradation of the nucleus (nucleophagy) as well as for mitophagy which contributes to regulate mitochondrial quantity and quality by eliminating the mitochondria to a basal level to fulfill cellular energy requirements and preventing excess ROS production. Required for normal mycelial growth and conidiogenesis. In Sordaria macrospora (strain ATCC MYA-333 / DSM 997 / K(L3346) / K-hell), this protein is Ubiquitin-like modifier-activating enzyme ATG7.